The sequence spans 401 residues: Ureide permease 4 (401 aa).

The Extracellular portion of the chain corresponds to 1 to 10 (MYVVESKAGA). The helical transmembrane segment at 11 to 31 (IGCMILSLCCLGSWPAILTLL) threads the bilayer. The Cytoplasmic segment spans residues 32-40 (ERRGRLPQH). The chain crosses the membrane as a helical span at residues 41–61 (TFLDFATANLLAAIVIAFSLG). The Extracellular segment spans residues 62–81 (EIGKSTFLKPDFTTQLPQDN). Residues 82 to 102 (WPSVLLAVAGGVLLSIGNLAT) form a helical membrane-spanning segment. Residues 103-104 (QY) are Cytoplasmic-facing. The helical transmembrane segment at 105-125 (AFAFVGLSVTEVITASITVVI) threads the bilayer. Over 126 to 141 (GTTLNYFLDNKINKAE) the chain is Extracellular. A helical membrane pass occupies residues 142–162 (ILFPGVGCFLIAVFLGAAVHA). The Cytoplasmic segment spans residues 163-231 (SNAADVKEKL…KRAIKVFGKS (69 aa)). Position 224–231 (224–231 (AIKVFGKS)) interacts with ATP. The chain crosses the membrane as a helical span at residues 232 to 252 (IMIGLFITLFAGISLSLFSPA). At 253–275 (FNLATNDQWSTLPKGVPKLVVYT) the chain is on the extracellular side. A helical membrane pass occupies residues 276 to 296 (AFFYFSIAGFLISLILNLIFL). The Cytoplasmic segment spans residues 297 to 318 (YRPMVGLARSSLKKYIYDSKGR). The helical transmembrane segment at 319 to 339 (GWAVFAGFLCGFGNGLQFMGG) threads the bilayer. Residues 340–344 (QAAGY) lie on the Extracellular side of the membrane. A helical membrane pass occupies residues 345–365 (AAADSVQALPLVSTFWGIVLF). At 366–374 (GEYRKSSKR) the chain is on the cytoplasmic side. Residues 375 to 395 (TYALLVSMLAMFVAAVAILMA) form a helical membrane-spanning segment. Residues 396–401 (SSGHRK) are Extracellular-facing.

This sequence belongs to the plant ureide permease (TC 2.A.7.19) family. As to expression, expressed in developing seedlings, flower filaments and stigma, and the top and bottom parts of carpels in siliques.

The protein resides in the membrane. In terms of biological role, proton-coupled transporter that transports a wide spectrum of oxo derivatives of heterocyclic nitrogen compounds. The polypeptide is Ureide permease 4 (Arabidopsis thaliana (Mouse-ear cress)).